A 271-amino-acid chain; its full sequence is uncharacterized protein (271 aa).

The segment at 233–261 is disordered; that stretch reads VEPDPNRFSEPVDQPTLVEEGKEARRTER. Basic and acidic residues predominate over residues 251–261; that stretch reads EEGKEARRTER.

In terms of biological role, may be involved in swimming motility. This is an uncharacterized protein from Haloferax volcanii (strain ATCC 29605 / DSM 3757 / JCM 8879 / NBRC 14742 / NCIMB 2012 / VKM B-1768 / DS2) (Halobacterium volcanii).